The chain runs to 133 residues: Small ribosomal subunit protein uS8 (133 aa).

It belongs to the universal ribosomal protein uS8 family. Part of the 30S ribosomal subunit. Contacts proteins S5 and S12.

One of the primary rRNA binding proteins, it binds directly to 16S rRNA central domain where it helps coordinate assembly of the platform of the 30S subunit. The polypeptide is Small ribosomal subunit protein uS8 (Chlamydia felis (strain Fe/C-56) (Chlamydophila felis)).